The following is a 968-amino-acid chain: RNA polymerase-associated protein RapA (968 aa).

The region spanning 164–334 (EVGQRHAPRV…FARLRLLDPD (171 aa)) is the Helicase ATP-binding domain. Residue 177–184 (DEVGLGKT) participates in ATP binding. Positions 280 to 283 (DEAH) match the DEAH box motif. One can recognise a Helicase C-terminal domain in the interval 490–664 (RVEWLLNYLI…ATPSEQEGLD (175 aa)).

This sequence belongs to the SNF2/RAD54 helicase family. RapA subfamily. As to quaternary structure, interacts with the RNAP. Has a higher affinity for the core RNAP than for the holoenzyme. Its ATPase activity is stimulated by binding to RNAP.

In terms of biological role, transcription regulator that activates transcription by stimulating RNA polymerase (RNAP) recycling in case of stress conditions such as supercoiled DNA or high salt concentrations. Probably acts by releasing the RNAP, when it is trapped or immobilized on tightly supercoiled DNA. Does not activate transcription on linear DNA. Probably not involved in DNA repair. The chain is RNA polymerase-associated protein RapA from Yersinia enterocolitica serotype O:8 / biotype 1B (strain NCTC 13174 / 8081).